The primary structure comprises 49 residues: MWDMIKNFFLFSSGVLQATTLLLVILIFMYVRKTKKKNKESSGFMDDKH.

The chain crosses the membrane as a helical span at residues 8-28; the sequence is FFLFSSGVLQATTLLLVILIF.

It localises to the cell membrane. This is an uncharacterized protein from Bacillus subtilis (strain 168).